We begin with the raw amino-acid sequence, 79 residues long: Acyl carrier protein (79 aa).

Positions 2-77 constitute a Carrier domain; it reads SDIEQRVKKI…QAIDYAKAHV (76 aa). S37 bears the O-(pantetheine 4'-phosphoryl)serine mark.

It belongs to the acyl carrier protein (ACP) family. Post-translationally, 4'-phosphopantetheine is transferred from CoA to a specific serine of apo-ACP by AcpS. This modification is essential for activity because fatty acids are bound in thioester linkage to the sulfhydryl of the prosthetic group.

Its subcellular location is the cytoplasm. Its pathway is lipid metabolism; fatty acid biosynthesis. Carrier of the growing fatty acid chain in fatty acid biosynthesis. The protein is Acyl carrier protein of Janthinobacterium sp. (strain Marseille) (Minibacterium massiliensis).